The following is a 490-amino-acid chain: MAEEPTTTTLVTPEKLPSPSLTPSEVSESTQDALPTETETLEKVTETNPPETADTTTKPEEETAAEHHPPTVTETETASTEKQEVKDEASQKEVAEEKKSMIPQNLGSFKEESSKLSDLSNSEKKSLDELKHLVREALDNHQFTNTPEEVKIWGIPLLEDDRSDVVLLKFLRAREFKVKDSFAMLKNTIKWRKEFKIDELVEEDLVDDLDKVVFMHGHDREGHPVCYNVYGEFQNKELYNKTFSDEEKRKHFLRTRIQFLERSIRKLDFSSGGVSTIFQVNDMKNSPGLGKKELRSATKQAVELLQDNYPEFVFKQAFINVPWWYLVFYTVIGPFMTPRSKSKLVFAGPSRSAETLFKYISPEQVPVQYGGLSVDPCDCNPDFSLEDSASEITVKPGTKQTVEIIIYEKCELVWEIRVTGWEVSYKAEFVPEEKDAYTVVIQKPRKMRPSDEPVLTHSFKVNELGKVLLTVDNPTSKKKKLVYRFNVKPL.

Over residues 1-17 (MAEEPTTTTLVTPEKLP) the composition is skewed to low complexity. The disordered stretch occupies residues 1–121 (MAEEPTTTTL…ESSKLSDLSN (121 aa)). An N-acetylalanine modification is found at Ala-2. Residues 19–33 (PSLTPSEVSESTQDA) are compositionally biased toward polar residues. A compositionally biased stretch (low complexity) spans 46–56 (ETNPPETADTT). 2 stretches are compositionally biased toward basic and acidic residues: residues 57–69 (TKPEEETAAEHHP) and 79–100 (STEKQEVKDEASQKEVAEEKKS). Residue Ser-108 is modified to Phosphoserine. Residues 109 to 121 (FKEESSKLSDLSN) show a composition bias toward basic and acidic residues. Residue Lys-193 forms a Glycyl lysine isopeptide (Lys-Gly) (interchain with G-Cter in ubiquitin) linkage. The CRAL-TRIO domain occupies 202-377 (EEDLVDDLDK…QYGGLSVDPC (176 aa)). The GOLD domain maps to 353–487 (AETLFKYISP…KKKLVYRFNV (135 aa)).

Belongs to the patellin family.

It is found in the membrane. The protein localises to the cytoplasm. In terms of biological role, carrier protein that may be involved in membrane-trafficking events associated with cell plate formation during cytokinesis. Binds to some hydrophobic molecules such as phosphoinositides and promotes their transfer between the different cellular sites. This chain is Patellin-3 (PATL3), found in Arabidopsis thaliana (Mouse-ear cress).